A 398-amino-acid chain; its full sequence is MAKLTVKDLDLKGKKVLVRVDFNVPLKNGVITNDNRISAALPTIKYIIEHGGRAILFSHLGRVKEEADKEGKSLAPVAKNLAEKLGQEVIFPGSTRGAELEAAIDALEDGQVLLVENTRFEDIDGKKESKNDPELGKYWASLGEGIFVNDAFGTAHRAHASNVGISANVEKAVAGFLLENEIAYIKEAVEAPERPFVAILGGSKVSDKIGVIENLLEKADKVLIGGGMTYTFYKAQGIEIGNSLCEEDKLDVAKSLLEKSNGKLILPVDSKEANAFADYTEVKVTEGEAVDAGFLGLDIGPKSIAKFDEALTGAKTVVWNGPMGVFENPDFQEGTIGVMDAIVKQPGVKSIIGGGDSAAAAINLGRADKFSWISTGGGASMELLEGKELPGLAALTEK.

Substrate is bound by residues 21–23 (DFN), arginine 36, 59–62 (HLGR), arginine 119, and arginine 157. ATP contacts are provided by residues lysine 208, glycine 296, glutamate 327, and 354-357 (GGDS).

This sequence belongs to the phosphoglycerate kinase family. In terms of assembly, monomer.

The protein localises to the cytoplasm. The catalysed reaction is (2R)-3-phosphoglycerate + ATP = (2R)-3-phospho-glyceroyl phosphate + ADP. It functions in the pathway carbohydrate degradation; glycolysis; pyruvate from D-glyceraldehyde 3-phosphate: step 2/5. In Streptococcus equi subsp. zooepidemicus (strain H70), this protein is Phosphoglycerate kinase.